A 289-amino-acid polypeptide reads, in one-letter code: Trihelix transcription factor GT-3b (289 aa).

The 57-residue stretch at 42–98 (WSVEETKELIGIRGELDQTFMETKRNKLLWEVISNKMRDKSFPRSPEQCKCKWKNLV) folds into the Myb-like domain. The Bipartite nuclear localization signal signature appears at 65-81 (KRNKLLWEVISNKMRDK). Residues 137 to 200 (ESEGGGGGTS…SNSSNSNNGV (64 aa)) form a disordered region. The span at 156–168 (SDEEEENVNEELV) shows a compositional bias: acidic residues. The Nuclear localization signal motif lies at 179-188 (PKKNIAKKRK). The segment covering 190–199 (GSNSSNSNNG) has biased composition (low complexity). Residues 223–275 (EAREKERAEKEEEWRRKMEELEKERLAMERMWRDREEQRRSREEMRAEKRDSL) adopt a coiled-coil conformation.

In terms of assembly, heterodimer with GT-3A. Associated with the mediator complex.

It is found in the nucleus. In terms of biological role, probable transcription factor that may play a role in the induction of CAM4 in response to pathogen and salt. The sequence is that of Trihelix transcription factor GT-3b (GT-3B) from Arabidopsis thaliana (Mouse-ear cress).